The sequence spans 333 residues: DNA-directed RNA polymerase subunit alpha (333 aa).

Residues 1–234 (MQSSVNEFLT…QQLAAFVDLK (234 aa)) form an alpha N-terminal domain (alpha-NTD) region. Residues 248 to 333 (IDPILLRPVD…SLKKDDKATA (86 aa)) form an alpha C-terminal domain (alpha-CTD) region.

It belongs to the RNA polymerase alpha chain family. Homodimer. The RNAP catalytic core consists of 2 alpha, 1 beta, 1 beta' and 1 omega subunit. When a sigma factor is associated with the core the holoenzyme is formed, which can initiate transcription.

The catalysed reaction is RNA(n) + a ribonucleoside 5'-triphosphate = RNA(n+1) + diphosphate. Its function is as follows. DNA-dependent RNA polymerase catalyzes the transcription of DNA into RNA using the four ribonucleoside triphosphates as substrates. In Stutzerimonas stutzeri (strain A1501) (Pseudomonas stutzeri), this protein is DNA-directed RNA polymerase subunit alpha.